We begin with the raw amino-acid sequence, 196 residues long: Peptide deformylase (196 aa).

Fe cation-binding residues include Cys105 and His147. Glu148 is an active-site residue. His151 lines the Fe cation pocket.

Belongs to the polypeptide deformylase family. Fe(2+) is required as a cofactor.

The catalysed reaction is N-terminal N-formyl-L-methionyl-[peptide] + H2O = N-terminal L-methionyl-[peptide] + formate. Removes the formyl group from the N-terminal Met of newly synthesized proteins. Requires at least a dipeptide for an efficient rate of reaction. N-terminal L-methionine is a prerequisite for activity but the enzyme has broad specificity at other positions. The sequence is that of Peptide deformylase from Flavobacterium johnsoniae (strain ATCC 17061 / DSM 2064 / JCM 8514 / BCRC 14874 / CCUG 350202 / NBRC 14942 / NCIMB 11054 / UW101) (Cytophaga johnsonae).